Reading from the N-terminus, the 245-residue chain is Ribonuclease 3 (245 aa).

In terms of domain architecture, RNase III spans 19–148 (FKVFQEKIGI…FIGALYLDQG (130 aa)). E61 provides a ligand contact to Mg(2+). Residue D65 is part of the active site. Mg(2+) is bound by residues D134 and E137. Residue E137 is part of the active site. The DRBM domain maps to 174–243 (DYKSQLQELI…AAEALKKLKE (70 aa)).

This sequence belongs to the ribonuclease III family. In terms of assembly, homodimer. Mg(2+) is required as a cofactor.

The protein localises to the cytoplasm. The enzyme catalyses Endonucleolytic cleavage to 5'-phosphomonoester.. Digests double-stranded RNA. Involved in the processing of primary rRNA transcript to yield the immediate precursors to the large and small rRNAs (23S and 16S). Processes some mRNAs, and tRNAs when they are encoded in the rRNA operon. Processes pre-crRNA and tracrRNA of type II CRISPR loci if present in the organism. The protein is Ribonuclease 3 of Bacillus cereus (strain ZK / E33L).